Reading from the N-terminus, the 440-residue chain is T-box transcription factor TBX20 (440 aa).

The T-box DNA-binding region spans 103-282 (LWDKFHDLGT…SNPFAKGFRD (180 aa)).

The protein resides in the nucleus. Functionally, transcriptional regulator that may be involved in heart developmental processes. In Xenopus tropicalis (Western clawed frog), this protein is T-box transcription factor TBX20 (tbx20).